Consider the following 234-residue polypeptide: DNA repair protein RecO (234 aa).

This sequence belongs to the RecO family.

In terms of biological role, involved in DNA repair and RecF pathway recombination. In Idiomarina loihiensis (strain ATCC BAA-735 / DSM 15497 / L2-TR), this protein is DNA repair protein RecO.